We begin with the raw amino-acid sequence, 396 residues long: MMNGIKSSPCNMPYLPDDLLLNILGRVSRLYYPILSLVSKRFRSLVGSLELYKIRTLLGRRTENCLYLSLRFSYGSNPRWFTLCRRPTRTPSPEPNLKSRWFTSCFRPILTNLTRATSKEEKKLSENLMVSIPTSNDCPLSGLTCNTIGSYIYMIGGYINGVLSSRVFFLDCRSHTWHEAPSMQVARKSPLVNVLDGKIYVVEGWRGSDYSNLIEIFDPKTQKWEHVPSPSAEMRGRYISKGLVYEEKLYLFGDKNVVYKPKESRWDALGFDMNLWLVSYGSSCVIDNVCYMVFYKRLIWYDSEVRYWRVLKGLEKLPKLRHRRSCIRMVDYGGKIAILWEKKVRVVGSDKKMIWCTEIALERRSAHKIYGKIEWCDVVLTVPKSCSLLEFIAVTI.

Residues 9-55 (PCNMPYLPDDLLLNILGRVSRLYYPILSLVSKRFRSLVGSLELYKIR) form the F-box domain. 3 Kelch repeats span residues 151–197 (YIYM…VLDG), 198–248 (KIYV…YEEK), and 250–296 (YLFG…VFYK).

The protein is Putative F-box/kelch-repeat protein At4g11770 of Arabidopsis thaliana (Mouse-ear cress).